A 257-amino-acid polypeptide reads, in one-letter code: Undecaprenyl-diphosphatase (257 aa).

The next 8 membrane-spanning stretches (helical) occupy residues 4 to 24 (LFKAIILGIIQGITEFLPISS), 51 to 71 (HVGTLISLLYCFWKDWINIFF), 78 to 98 (LFIIIGTIPAGIAGIAFHDLI), 106 to 126 (LIIVVTLILVGFLMLYAEKVG), 133 to 153 (ITLSDAVVIGTAQAIALIPGV), 171 to 191 (AYAAKFSFLLSTPAIAGAAML), 207 to 227 (LFIIGVISAAITGIIAIKFLL), and 235 to 255 (LNLFIYYRWFLAVVIFLLYFF).

It belongs to the UppP family.

The protein resides in the cell inner membrane. The catalysed reaction is di-trans,octa-cis-undecaprenyl diphosphate + H2O = di-trans,octa-cis-undecaprenyl phosphate + phosphate + H(+). Catalyzes the dephosphorylation of undecaprenyl diphosphate (UPP). Confers resistance to bacitracin. The sequence is that of Undecaprenyl-diphosphatase from Thermodesulfovibrio yellowstonii (strain ATCC 51303 / DSM 11347 / YP87).